The following is a 211-amino-acid chain: Large ribosomal subunit protein uL4 (211 aa).

The interval 42 to 73 (NNRQGTHSTKDRSEVRGGGIKPWAQKGTGRAR) is disordered.

This sequence belongs to the universal ribosomal protein uL4 family. Part of the 50S ribosomal subunit.

Functionally, one of the primary rRNA binding proteins, this protein initially binds near the 5'-end of the 23S rRNA. It is important during the early stages of 50S assembly. It makes multiple contacts with different domains of the 23S rRNA in the assembled 50S subunit and ribosome. Forms part of the polypeptide exit tunnel. This chain is Large ribosomal subunit protein uL4, found in Leptospira biflexa serovar Patoc (strain Patoc 1 / Ames).